Reading from the N-terminus, the 872-residue chain is MVANGHFAGVGDVLDAKNYEHGVQVIDEEKEFNPNLSNYLSYENVTPAGFNYHLISVFGSQSTGKSTLLNSLFGTHFSVMSETERRQTTKGIWLSKNKRLKSDKGQDNQTKMADNILVMDVEGTDGRERGEDQDFERKSALFALATSEVLIVNIWEHQVGLYQGANMGLLKTVFEVNLELFLKDKRSNPRSLLFFVIRDFLGTTPLQNLQNTLLQDLNRIWNSLSKPAGLENSSITDYFDFAFAGLPHKNFQPEKFVDEVRKLSTRFCDGHRDPNKTDAKGTSSIEGGIFLPEYHRRIPADGFAVYAEGIWDQIVNNKDLDLPTQQELLAQFRCDEISREVLVAFDEAISPFEAKQAEAVQAGNPQVLGGLGSAMCNARMKSVKNFDTEASRYHKRVYQMKKSELQDKIDSRLKALFLGQLSAAHRSGIQEFTESVTAAVKAGQKRGASYDFAEIVTKERKLAIEKFEKEARAAVVEDTQWSNYQQELSLYQKDLENIGGQLRRDEMRRLATRVGRWVRSRLGESIDLEFNAIGSGRGGSGAPEFGDKPSEKSLWDRVWTLFVDTVLDAERRFTERASSFDASIDEVDVGLWRLRRKSWGVLRAKIEEEMMEGNILLKLRENFEDKFRYDDAGVPRIWRPNDDIESIYTRARESTLTLIPLLSRFRLAETNAPPPLDKWIGHTPSSATPADEEDLTPIGGVDEDEGKSLEEEMTMIGEAKKQDLTVRFKKTADGVYVEAKRSAIGGITQVPLYFYGLLLALGWNEIVAVLRNPAYFLLLFVCAVTAYVTYQLNLWGPIIKMTEAASQQALMEGKRRLREFLEASDTGLQAMAMSEGRNAEEYDMSNMKNRKSAGGFQNNRSHIDDADDDDDF.

At 1–749 (MVANGHFAGV…KRSAIGGITQ (749 aa)) the chain is on the cytoplasmic side. The GB1/RHD3-type G domain maps to 49 to 294 (GFNYHLISVF…IEGGIFLPEY (246 aa)). A GTP-binding site is contributed by 59–66 (GSQSTGKS). Residues 482–504 (SNYQQELSLYQKDLENIGGQLRR) adopt a coiled-coil conformation. The disordered stretch occupies residues 676-704 (LDKWIGHTPSSATPADEEDLTPIGGVDED). Acidic residues predominate over residues 690-704 (ADEEDLTPIGGVDED). The chain crosses the membrane as a helical span at residues 750–770 (VPLYFYGLLLALGWNEIVAVL). Residues 771–773 (RNP) are Lumenal-facing. A helical transmembrane segment spans residues 774–794 (AYFLLLFVCAVTAYVTYQLNL). The Cytoplasmic segment spans residues 795–872 (WGPIIKMTEA…IDDADDDDDF (78 aa)). Residues 849–872 (NRKSAGGFQNNRSHIDDADDDDDF) are disordered.

The protein belongs to the TRAFAC class dynamin-like GTPase superfamily. GB1/RHD3 GTPase family. RHD3 subfamily.

Its subcellular location is the endoplasmic reticulum membrane. Cooperates with the reticulon proteins and tubule-shaping DP1 family proteins to generate and maintain the structure of the tubular endoplasmic reticulum network. Has GTPase activity, which is required for its function in ER organization. The sequence is that of Protein SEY1 from Paracoccidioides brasiliensis (strain Pb03).